A 160-amino-acid polypeptide reads, in one-letter code: Major pollen allergen Aln g 1 (160 aa).

It belongs to the BetVI family.

The protein is Major pollen allergen Aln g 1 of Alnus glutinosa (European alder).